Here is a 477-residue protein sequence, read N- to C-terminus: Ribulose bisphosphate carboxylase large chain (477 aa).

A propeptide spanning residues 1–2 (MS) is cleaved from the precursor. The residue at position 3 (proline 3) is an N-acetylproline. N6,N6,N6-trimethyllysine is present on lysine 14. Residues asparagine 123 and threonine 173 each coordinate substrate. Lysine 175 acts as the Proton acceptor in catalysis. Lysine 177 provides a ligand contact to substrate. 3 residues coordinate Mg(2+): lysine 201, aspartate 203, and glutamate 204. Lysine 201 is modified (N6-carboxylysine). Residue histidine 294 is the Proton acceptor of the active site. Residues arginine 295, histidine 327, and serine 379 each contribute to the substrate site.

It belongs to the RuBisCO large chain family. Type I subfamily. Heterohexadecamer of 8 large chains and 8 small chains; disulfide-linked. The disulfide link is formed within the large subunit homodimers. Requires Mg(2+) as cofactor. Post-translationally, the disulfide bond which can form in the large chain dimeric partners within the hexadecamer appears to be associated with oxidative stress and protein turnover.

The protein resides in the plastid. It localises to the chloroplast. The catalysed reaction is 2 (2R)-3-phosphoglycerate + 2 H(+) = D-ribulose 1,5-bisphosphate + CO2 + H2O. The enzyme catalyses D-ribulose 1,5-bisphosphate + O2 = 2-phosphoglycolate + (2R)-3-phosphoglycerate + 2 H(+). Its function is as follows. RuBisCO catalyzes two reactions: the carboxylation of D-ribulose 1,5-bisphosphate, the primary event in carbon dioxide fixation, as well as the oxidative fragmentation of the pentose substrate in the photorespiration process. Both reactions occur simultaneously and in competition at the same active site. The chain is Ribulose bisphosphate carboxylase large chain from Persea americana (Avocado).